The sequence spans 298 residues: Tyrosine recombinase XerC (298 aa).

Residues 1–83 (MHAAVERFLH…ALSRFADHLV (83 aa)) enclose the Core-binding (CB) domain. The 180-residue stretch at 104–283 (HLPRPVDVDQ…DWQHLADAYD (180 aa)) folds into the Tyr recombinase domain. Catalysis depends on residues Arg144, Lys166, His235, Arg238, and His261. Catalysis depends on Tyr270, which acts as the O-(3'-phospho-DNA)-tyrosine intermediate.

The protein belongs to the 'phage' integrase family. XerC subfamily. Forms a cyclic heterotetrameric complex composed of two molecules of XerC and two molecules of XerD.

It is found in the cytoplasm. Site-specific tyrosine recombinase, which acts by catalyzing the cutting and rejoining of the recombining DNA molecules. The XerC-XerD complex is essential to convert dimers of the bacterial chromosome into monomers to permit their segregation at cell division. It also contributes to the segregational stability of plasmids. The protein is Tyrosine recombinase XerC of Chromohalobacter salexigens (strain ATCC BAA-138 / DSM 3043 / CIP 106854 / NCIMB 13768 / 1H11).